A 599-amino-acid polypeptide reads, in one-letter code: UvrABC system protein C (599 aa).

One can recognise a GIY-YIG domain in the interval 15 to 93 (DNPGVYQYYD…IKTLQPRYNI (79 aa)). Residues 207 to 242 (KDSMKDFKKVMTNLAQNMHFEEAQKIKEKIEILENY) form the UVR domain.

The protein belongs to the UvrC family. In terms of assembly, interacts with UvrB in an incision complex.

It localises to the cytoplasm. Its function is as follows. The UvrABC repair system catalyzes the recognition and processing of DNA lesions. UvrC both incises the 5' and 3' sides of the lesion. The N-terminal half is responsible for the 3' incision and the C-terminal half is responsible for the 5' incision. The polypeptide is UvrABC system protein C (Flavobacterium psychrophilum (strain ATCC 49511 / DSM 21280 / CIP 103535 / JIP02/86)).